The chain runs to 320 residues: Retron Ec86 reverse transcriptase (320 aa).

Residues 34–248 enclose the Reverse transcriptase domain; it reads VETLRLLIYT…SQRKVTGLVI (215 aa). The Mg(2+) site is built by D119, D197, and D198. Positions 230 to 320 are necessary and required for recognition and binding of RNA; sequence KKTCISGPRS…GKNPLNKAKT (91 aa).

This sequence belongs to the bacterial reverse transcriptase family.

The catalysed reaction is DNA(n) + a 2'-deoxyribonucleoside 5'-triphosphate = DNA(n+1) + diphosphate. Reverse transcriptase (RT) component of antiviral defense system retron Ec86, composed of a non-coding RNA (ncRNA), a ribosyltransferase/DNA-binding protein and this RT. Expression of the 3-gene retron confers protection against bacteriophage T5. At multiplicity of infection (MOI) of 0.02 cultures grow normally when infected with T5 without collapsing, at MOI 2 cultures enter growth stasis. Responsible for synthesis of msDNA (a branched molecule with RNA linked by a 2',5'-phosphodiester bond to ssDNA). The retron transcript serves as primer (from a conserved internal G residue) and template for the reaction, and codes for the RT. Recognizes only its cognate RNA as a primer template. Overexpression of the ncRNA and RT (without the ribosyltransferase), which leads to increased levels of msDNA, is mutagenic in vivo. This may be due to a mismatch in the msDNA stem which binds and sequesters MutS and/or MutL. The protein is Retron Ec86 reverse transcriptase of Escherichia coli.